A 359-amino-acid chain; its full sequence is Mitochondrial glutathione transporter SLC25A39 (359 aa).

The Mitochondrial intermembrane portion of the chain corresponds to 1 to 14 (MDDQDPGGISPLQQ). Solcar repeat units follow at residues 9-151 (ISPL…LKAF), 159-243 (SDLY…VKSW), and 253-347 (TSVG…GKSF). A helical transmembrane segment spans residues 15 to 35 (MVASGAGAVVTSLFMTPLDVV). Over 36 to 121 (KVRLQSQRPS…VKIVRHEGTR (86 aa)) the chain is Mitochondrial matrix. [2Fe-2S] cluster-binding residues include cysteine 74, cysteine 78, cysteine 88, and cysteine 94. Residues 122–142 (TLWSGLPATLVMTVPATAIYF) traverse the membrane as a helical segment. Residues 143 to 164 (TAYDQLKAFLCGQSLTSDLYAP) are Mitochondrial intermembrane-facing. The chain crosses the membrane as a helical span at residues 165–185 (MVAGALARMGTVTVVSPLELV). The Mitochondrial matrix segment spans residues 186-214 (RTKLQAQHVSYRELASSVQAAVTQGGWRS). The helical transmembrane segment at 215–235 (LWLGWGPTALRDVPFSALYWF) threads the bilayer. Topologically, residues 236 to 255 (NYELVKSWLSGLRPKDQTSV) are mitochondrial intermembrane. A helical membrane pass occupies residues 256 to 276 (GISFVAGGISGMVAATLTLPF). Over 277-317 (DVVKTQRQMSLGAVEAVRVKPPRVDSTWLLLRRIRAESGTR) the chain is Mitochondrial matrix. Residues 318-338 (GLFAGFLPRIIKAAPSCAIMI) traverse the membrane as a helical segment. The Mitochondrial intermembrane portion of the chain corresponds to 339–359 (STYEFGKSFFQRLNQEQPLGR).

The protein belongs to the mitochondrial carrier (TC 2.A.29) family. In terms of processing, cleaved and degraded by AFG3L2; degradation by AFG3L2 is regulated by the ability of SLC25A39 to bind iron-sulfur. In absence of mitochondrial glutathione, SLC25A39 binds iron-sulfur, preventing cleavage and degradation by AFG3L2. The presence of mitochondrial glutathione prevents iron-sulfur-binding to SLC25A39, promoting cleavage and degradation by AFG3L2. Abundant expression in bone marrow, spleen, testis and kidney.

Its subcellular location is the mitochondrion inner membrane. It catalyses the reaction glutathione(in) = glutathione(out). Its activity is regulated as follows. The activity of SLC25A39 is regulated by levels of mitochondrial glutathione via its ability to bind [2Fe-2S] iron-sulfur cluster. Upon physiological levels of mitochondrial glutathione, glutathione prevents iron-sulfur-binding to SLC25A39 promoting cleavage and degradation by AFG3L2. Upon depletion of mitochondrial glutathione, SLC25A39 binds iron-sulfur, preventing cleavage and degradation by AFG3L2. Functionally, mitochondrial transporter required for glutathione import into mitochondria. Glutathione, which plays key roles in oxidative metabolism, is produced exclusively in the cytosol and is imported in many organelles. Mitochondrial glutathione is required for the activity and stability of proteins containing iron-sulfur clusters, as well as erythropoiesis. This Mus musculus (Mouse) protein is Mitochondrial glutathione transporter SLC25A39.